The chain runs to 233 residues: Pirin-like protein YhaK (233 aa).

It belongs to the pirin family. Monomer.

The protein localises to the cytoplasm. Functionally, does not have quercetin 2,3-dioxygenase activity. This chain is Pirin-like protein YhaK (yhaK), found in Escherichia coli O157:H7.